The chain runs to 2136 residues: U5 small nuclear ribonucleoprotein 200 kDa helicase (2136 aa).

2 positions are modified to phosphoserine: S17 and S26. Residues E39–M81 form a disordered region. K46 participates in a covalent cross-link: Glycyl lysine isopeptide (Lys-Gly) (interchain with G-Cter in SUMO2). The span at E48–M81 shows a compositional bias: basic and acidic residues. A coiled-coil region spans residues D54–M84. At S225 the chain carries Phosphoserine. Residue T389 is modified to Phosphothreonine. The tract at residues D395–A2129 is interaction with C9orf78 and WBP4. A Helicase ATP-binding 1 domain is found at R490–L673. A503 to T510 provides a ligand contact to ATP. The short motif at D615 to H618 is the DEAH box element. Residues P684–G921 enclose the Helicase C-terminal 1 domain. Position 709 is a phosphotyrosine (Y709). Residue K944 forms a Glycyl lysine isopeptide (Lys-Gly) (interchain with G-Cter in SUMO) linkage. An N6-acetyllysine; alternate modification is found at K971. Residue K971 forms a Glycyl lysine isopeptide (Lys-Gly) (interchain with G-Cter in SUMO); alternate linkage. In terms of domain architecture, SEC63 1 spans T982–F1286. Glycyl lysine isopeptide (Lys-Gly) (interchain with G-Cter in SUMO) cross-links involve residues K1071 and K1199. The interaction with TSSC4 stretch occupies residues L1282–D2136. The Helicase ATP-binding 2 domain maps to N1337–F1512. An ATP-binding site is contributed by A1350 to T1357. Phosphothreonine is present on T1428. Positions D1454 to H1457 match the DEAH box motif. The Helicase C-terminal 2 domain maps to P1545 to D1753. At T1765 the chain carries Phosphothreonine. The SEC63 2 domain occupies P1812–V2124. Position 2002 is a phosphoserine (S2002). K2091 is covalently cross-linked (Glycyl lysine isopeptide (Lys-Gly) (interchain with G-Cter in SUMO)). T2131 is subject to Phosphothreonine. S2133 and S2135 each carry phosphoserine.

This sequence belongs to the helicase family. SKI2 subfamily. Component of a core complex containing at least PRPF8, SNRNP200, EFTUD2 and SNRNP40. Component of the U5 snRNP and U4/U6-U5 tri-snRNP complexes, building blocks of the spliceosome. Component of the U4/U6-U5 tri-snRNP complex composed of the U4, U6 and U5 snRNAs and at least PRPF3, PRPF4, PRPF6, PRPF8, PRPF31, SNRNP200, TXNL4A, SNRNP40, DDX23, CD2BP2, PPIH, SNU13, EFTUD2, SART1 and USP39. Component of precatalytic, catalytic and postcatalytic spliceosomal complexes. Component of the minor spliceosome, which splices U12-type introns. Interacts with C9orf78; the interaction is direct and mutually exclusive with its interaction with WBP4. Interacts with WBP4; the interaction is mutually exclusive with its interaction with C9orf78. Interacts with PRPF8. Interacts with TSSC4; the interaction is direct, excludes recruitment of C9ORF78 and WBP4 to SNRNP200 and negatively regulates its RNA helicase activity.

The protein resides in the nucleus. The enzyme catalyses ATP + H2O = ADP + phosphate + H(+). In terms of biological role, catalyzes the ATP-dependent unwinding of U4/U6 RNA duplices, an essential step in the assembly of a catalytically active spliceosome. Plays a role in pre-mRNA splicing as core component of precatalytic, catalytic and postcatalytic spliceosomal complexes. As a component of the minor spliceosome, involved in the splicing of U12-type introns in pre-mRNAs. Involved in spliceosome assembly, activation and disassembly. Mediates changes in the dynamic network of RNA-RNA interactions in the spliceosome. This Mus musculus (Mouse) protein is U5 small nuclear ribonucleoprotein 200 kDa helicase (Snrnp200).